We begin with the raw amino-acid sequence, 106 residues long: Large ribosomal subunit protein eL42 (106 aa).

The protein belongs to the eukaryotic ribosomal protein eL42 family.

In Debaryomyces hansenii (strain ATCC 36239 / CBS 767 / BCRC 21394 / JCM 1990 / NBRC 0083 / IGC 2968) (Yeast), this protein is Large ribosomal subunit protein eL42 (RPL44).